Consider the following 447-residue polypeptide: Pup--protein ligase 2 (447 aa).

Glu4 is a Mg(2+) binding site. An ATP-binding site is contributed by Arg48. Tyr50 lines the Mg(2+) pocket. The active-site Proton acceptor is Asp52. Glu58 contributes to the Mg(2+) binding site. Residues Thr61 and Trp414 each coordinate ATP.

Belongs to the Pup ligase/Pup deamidase family. Pup-conjugating enzyme subfamily.

It catalyses the reaction ATP + [prokaryotic ubiquitin-like protein]-L-glutamate + [protein]-L-lysine = ADP + phosphate + N(6)-([prokaryotic ubiquitin-like protein]-gamma-L-glutamyl)-[protein]-L-lysine.. It functions in the pathway protein degradation; proteasomal Pup-dependent pathway. It participates in protein modification; protein pupylation. Its function is as follows. Catalyzes the covalent attachment of the prokaryotic ubiquitin-like protein modifier Pup to the proteasomal substrate proteins, thereby targeting them for proteasomal degradation. This tagging system is termed pupylation. The ligation reaction involves the side-chain carboxylate of the C-terminal glutamate of Pup and the side-chain amino group of a substrate lysine. This is Pup--protein ligase 2 from Rhodococcus erythropolis (Arthrobacter picolinophilus).